The primary structure comprises 43 residues: Protein PsbN (43 aa).

The helical transmembrane segment at 4–24 threads the bilayer; the sequence is ATFVAIFISCLLISFTGYALY.

Belongs to the PsbN family.

It localises to the plastid. The protein localises to the chloroplast thylakoid membrane. May play a role in photosystem I and II biogenesis. This is Protein PsbN from Marchantia polymorpha (Common liverwort).